The chain runs to 503 residues: Phenylalanine--tRNA ligase alpha subunit (503 aa).

S2 is subject to N-acetylserine. The interval 2-173 (SDFQLEILKK…KRKLIAQGKI (172 aa)) is contains the major tRNA-Phe binding sites. Residues T333, 374-376 (QVE), and Y414 contribute to the L-phenylalanine site. E416 contacts Mg(2+). F440 serves as a coordination point for L-phenylalanine.

This sequence belongs to the class-II aminoacyl-tRNA synthetase family. Phe-tRNA synthetase alpha subunit type 2 subfamily. In terms of assembly, tetramer of two alpha and two beta subunits. The cofactor is Mg(2+).

Its subcellular location is the cytoplasm. It carries out the reaction tRNA(Phe) + L-phenylalanine + ATP = L-phenylalanyl-tRNA(Phe) + AMP + diphosphate + H(+). The chain is Phenylalanine--tRNA ligase alpha subunit (FRS2) from Saccharomyces cerevisiae (strain ATCC 204508 / S288c) (Baker's yeast).